The sequence spans 660 residues: Probable cation-transporting P-type ATPase J (660 aa).

Helical transmembrane passes span 33–53, 60–80, 94–114, 261–281, and 292–312; these read WAALALGLFSAGLLTQLCGAP, LFLACYATGGWEPGLAGLQAL, AAIGAAAIGQIAEGALLIVIF, IGMVAVTLAVFAVPPLWGETL, and MIVASPCAVVLATMPPLLAAI. Catalysis depends on Asp340, which acts as the 4-aspartylphosphate intermediate. Residues Asp544 and Asp548 each contribute to the Mg(2+) site. The chain crosses the membrane as a helical span at residues 598-618; the sequence is IVVANLIVAVTFIAGLVVWDL.

It belongs to the cation transport ATPase (P-type) (TC 3.A.3) family. Type IB subfamily.

It localises to the cell membrane. The catalysed reaction is ATP + H2O = ADP + phosphate + H(+). This Mycobacterium tuberculosis (strain CDC 1551 / Oshkosh) protein is Probable cation-transporting P-type ATPase J (ctpJ).